The chain runs to 135 residues: Ribosomal RNA large subunit methyltransferase H (135 aa).

S-adenosyl-L-methionine is bound by residues L52, G83, and 102 to 107 (LSSLTL).

Belongs to the RNA methyltransferase RlmH family. Homodimer.

The protein localises to the cytoplasm. The enzyme catalyses pseudouridine(1915) in 23S rRNA + S-adenosyl-L-methionine = N(3)-methylpseudouridine(1915) in 23S rRNA + S-adenosyl-L-homocysteine + H(+). Specifically methylates the pseudouridine at position 1915 (m3Psi1915) in 23S rRNA. This is Ribosomal RNA large subunit methyltransferase H from Polynucleobacter necessarius subsp. necessarius (strain STIR1).